Here is a 281-residue protein sequence, read N- to C-terminus: Release factor glutamine methyltransferase (281 aa).

S-adenosyl-L-methionine is bound by residues glutamate 142 and asparagine 184. 184–187 is a binding site for substrate; sequence NPPY. The segment at 261–281 is disordered; it reads AADHPDLNNRPRFATARKALP.

Belongs to the protein N5-glutamine methyltransferase family. PrmC subfamily.

The enzyme catalyses L-glutaminyl-[peptide chain release factor] + S-adenosyl-L-methionine = N(5)-methyl-L-glutaminyl-[peptide chain release factor] + S-adenosyl-L-homocysteine + H(+). In terms of biological role, methylates the class 1 translation termination release factors RF1/PrfA and RF2/PrfB on the glutamine residue of the universally conserved GGQ motif. The protein is Release factor glutamine methyltransferase of Streptomyces coelicolor (strain ATCC BAA-471 / A3(2) / M145).